The following is a 1623-amino-acid chain: ATP-binding cassette sub-family A member 9 (1623 aa).

A helical transmembrane segment spans residues 31–51 (LLEWLFSLLLILFVYQLSSNL). A glycan (N-linked (GlcNAc...) asparagine) is linked at asparagine 120. The next 6 membrane-spanning stretches (helical) occupy residues 225–245 (FFIFFCVISFSSLIYYLSVNI), 265–285 (AFWLSWSLMYAGFILVVAVLM), 295–315 (VVLTGFMVVFLLFLFYGLSLI), 329–349 (FLTGLAIFILTVFWGSLGFTA), 354–374 (LPAFVEWTLCFLSPFAFTTGM), and 398–418 (LIMATLFMLVLDALLYLVLAL). The ABC transporter 1 domain maps to 481–716 (IRIKNLKKEY…WGIGYHLSLH (236 aa)). 517–524 (GHSGAGKT) serves as a coordination point for ATP. The next 7 helical transmembrane spans lie at 863–883 (LMTVLLLFGISFVPQLLEHLV), 1025–1045 (AFFWIPVAASLTPYIAMGSIS), 1071–1091 (LVDIPIYFLILFLMQIMDSVF), 1107–1127 (IPCSIGYASSLIFMTYVISFI), 1135–1155 (SGIWSFFFLIVTIFFIIATDI), 1163–1183 (LLICTFLVPPFTLIGSLLIFS), and 1199–1219 (QLVFLALLIPYLHFLLFFFIL). Residues 1287-1520 (LRKEYIGRTK…FGKDYLLEMK (234 aa)) form the ABC transporter 2 domain. Residue 1325-1332 (GHNGAGKS) participates in ATP binding.

This sequence belongs to the ABC transporter superfamily. ABCA family. Highly expressed in heart and to lower extent in kidney, brain and spleen. Weakly expressed in developing and adult brains. Weakly expressed in the cerebellar granular layer at P14 and P21.

It is found in the membrane. In terms of biological role, transporter that may play a role in monocyte differentiation and lipid transport and homeostasis. This chain is ATP-binding cassette sub-family A member 9 (Abca9), found in Mus musculus (Mouse).